Reading from the N-terminus, the 440-residue chain is Trigger factor (440 aa).

A PPIase FKBP-type domain is found at 176–261 (GDKVVIDYQN…VKSIYVVKDV (86 aa)).

It belongs to the FKBP-type PPIase family. Tig subfamily.

It localises to the cytoplasm. It catalyses the reaction [protein]-peptidylproline (omega=180) = [protein]-peptidylproline (omega=0). Its function is as follows. Involved in protein export. Acts as a chaperone by maintaining the newly synthesized protein in an open conformation. Functions as a peptidyl-prolyl cis-trans isomerase. This chain is Trigger factor, found in Ehrlichia canis (strain Jake).